Consider the following 419-residue polypeptide: UDP-N-acetylglucosamine 1-carboxyvinyltransferase (419 aa).

Residue 22-23 participates in phosphoenolpyruvate binding; it reads KN. Position 93 (Arg93) interacts with UDP-N-acetyl-alpha-D-glucosamine. Catalysis depends on Cys117, which acts as the Proton donor. Position 117 is a 2-(S-cysteinyl)pyruvic acid O-phosphothioketal (Cys117). The UDP-N-acetyl-alpha-D-glucosamine site is built by Asp306 and Ile328.

The protein belongs to the EPSP synthase family. MurA subfamily.

It is found in the cytoplasm. It carries out the reaction phosphoenolpyruvate + UDP-N-acetyl-alpha-D-glucosamine = UDP-N-acetyl-3-O-(1-carboxyvinyl)-alpha-D-glucosamine + phosphate. It participates in cell wall biogenesis; peptidoglycan biosynthesis. In terms of biological role, cell wall formation. Adds enolpyruvyl to UDP-N-acetylglucosamine. The polypeptide is UDP-N-acetylglucosamine 1-carboxyvinyltransferase (Idiomarina loihiensis (strain ATCC BAA-735 / DSM 15497 / L2-TR)).